The sequence spans 657 residues: UvrABC system protein B (657 aa).

Residues 25–182 (NSIKSNNRAQ…KKLIEIQYER (158 aa)) enclose the Helicase ATP-binding domain. Position 38-45 (38-45 (GVTGSGKT)) interacts with ATP. A Beta-hairpin motif is present at residues 91 to 114 (YYDYYQPEAYVPQTDTFIEKDASI). The 167-residue stretch at 429-595 (QIDDLYGEIN…TIIKDVRDII (167 aa)) folds into the Helicase C-terminal domain. The UVR domain maps to 621 to 656 (DKLIKDLTEEMLLAAKNLQFERAAELRDIINEIKDG).

This sequence belongs to the UvrB family. In terms of assembly, forms a heterotetramer with UvrA during the search for lesions. Interacts with UvrC in an incision complex.

It is found in the cytoplasm. Functionally, the UvrABC repair system catalyzes the recognition and processing of DNA lesions. A damage recognition complex composed of 2 UvrA and 2 UvrB subunits scans DNA for abnormalities. Upon binding of the UvrA(2)B(2) complex to a putative damaged site, the DNA wraps around one UvrB monomer. DNA wrap is dependent on ATP binding by UvrB and probably causes local melting of the DNA helix, facilitating insertion of UvrB beta-hairpin between the DNA strands. Then UvrB probes one DNA strand for the presence of a lesion. If a lesion is found the UvrA subunits dissociate and the UvrB-DNA preincision complex is formed. This complex is subsequently bound by UvrC and the second UvrB is released. If no lesion is found, the DNA wraps around the other UvrB subunit that will check the other stand for damage. In Clostridium beijerinckii (strain ATCC 51743 / NCIMB 8052) (Clostridium acetobutylicum), this protein is UvrABC system protein B.